Here is a 344-residue protein sequence, read N- to C-terminus: NDP-polyphosphate phosphotransferase 2 (344 aa).

A disordered region spans residues Met1–Pro60.

It belongs to the polyphosphate kinase 2 (PPK2) family. Class I subfamily. Mg(2+) is required as a cofactor.

It carries out the reaction [phosphate](n) + ATP = [phosphate](n+1) + ADP. It catalyses the reaction [phosphate](n) + CTP = [phosphate](n+1) + CDP. The catalysed reaction is [phosphate](n) + GTP = [phosphate](n+1) + GDP. The enzyme catalyses [phosphate](n) + UTP = [phosphate](n+1) + UDP. Functionally, uses inorganic polyphosphate (polyP) as a donor to convert NDP to NTP. PolyP hydrolysis is slightly faster with ADP, but it can also use GDP, CDP and UDP. The protein is NDP-polyphosphate phosphotransferase 2 of Ruegeria pomeroyi (strain ATCC 700808 / DSM 15171 / DSS-3) (Silicibacter pomeroyi).